Consider the following 141-residue polypeptide: Large ribosomal subunit protein uL11 (141 aa).

This sequence belongs to the universal ribosomal protein uL11 family. Part of the ribosomal stalk of the 50S ribosomal subunit. Interacts with L10 and the large rRNA to form the base of the stalk. L10 forms an elongated spine to which L12 dimers bind in a sequential fashion forming a multimeric L10(L12)X complex. Post-translationally, one or more lysine residues are methylated.

Its function is as follows. Forms part of the ribosomal stalk which helps the ribosome interact with GTP-bound translation factors. The sequence is that of Large ribosomal subunit protein uL11 from Thermosipho africanus (strain TCF52B).